The primary structure comprises 111 residues: Cytochrome c (111 aa).

At Ala-1 the chain carries N-acetylalanine. Residues Cys-22, Cys-25, and His-26 each contribute to the heme c site. N6,N6,N6-trimethyllysine is present on Lys-80. Met-88 lines the heme c pocket. Lys-94 bears the N6,N6,N6-trimethyllysine mark.

This sequence belongs to the cytochrome c family. Binds 1 heme c group covalently per subunit.

It localises to the mitochondrion intermembrane space. Functionally, electron carrier protein. The oxidized form of the cytochrome c heme group can accept an electron from the heme group of the cytochrome c1 subunit of cytochrome reductase. Cytochrome c then transfers this electron to the cytochrome oxidase complex, the final protein carrier in the mitochondrial electron-transport chain. The protein is Cytochrome c of Brassica napus (Rape).